The sequence spans 326 residues: tRNA-modifying protein YgfZ (326 aa).

Tryptophan 27 and tryptophan 189 together coordinate folate.

The protein belongs to the tRNA-modifying YgfZ family.

It localises to the cytoplasm. In terms of biological role, folate-binding protein involved in regulating the level of ATP-DnaA and in the modification of some tRNAs. It is probably a key factor in regulatory networks that act via tRNA modification, such as initiation of chromosomal replication. The polypeptide is tRNA-modifying protein YgfZ (Escherichia coli O7:K1 (strain IAI39 / ExPEC)).